A 514-amino-acid polypeptide reads, in one-letter code: MEKLYESMYQLIVETSTKLPKDVRRAILKAKQRENAGTRAAMSLATITENIKMADENVSPICQDTGLPTFKIKVPVGINQIQIKETIKKAIAQATKDGKLRPNSVDSLTGENSGDNLGEGLPVVKFEQWEKDYMDVRLILKGGGCENKNIQYSLPCELEGLGRAGRDLDGIRKCILHAVYQAQGQGCSAGFIGVGIGGDRSAGYDLAKEQLFREVDDVNPNEELRQLEEYIMENANKLGIGTMGFGGETTLLGCKVGAMHRIPASFFVSVAYNCWAFRRLGVHIDPNTGEIIKWLYQDGEDVDFQENAAQEEHLASTDSERRVITLQAPITEEQIRELKVGDVVRINGIIYTGRDAIHKYLMDHDAPVDLNGQIIYHCGPVMLKDENGNWEVKAAGPTTSIREEPYQGDIMKKFGIRAVMGKGGMGQKTLQALKEHGGVYLNAIGGAAQYYADCIEAVEGVDLLEFGIPEAMWHLRVKDFTAVVTMDSHGNSLHEDIEKSSLEKLSQFKEPVFS.

Positions 62, 187, and 274 each coordinate [4Fe-4S] cluster.

The protein belongs to the class-I fumarase family. As to quaternary structure, homodimer. Requires [4Fe-4S] cluster as cofactor.

It carries out the reaction (S)-malate = fumarate + H2O. Its pathway is carbohydrate metabolism; tricarboxylic acid cycle; (S)-malate from fumarate: step 1/1. Functionally, catalyzes the reversible hydration of fumarate to (S)-malate. The sequence is that of Putative fumarate hydratase class I (fumA) from Geobacillus stearothermophilus (Bacillus stearothermophilus).